A 622-amino-acid polypeptide reads, in one-letter code: Low affinity potassium transport system protein Kup (622 aa).

A run of 12 helical transmembrane segments spans residues 9 to 29 (LSAV…TSPL), 46 to 66 (PDVV…VVSV), 101 to 121 (ILVV…VITP), 137 to 157 (PALD…LFVI), 165 to 185 (VGKL…LLGL), 213 to 233 (VSFF…ALYA), 247 to 267 (WFTV…ALLL), 276 to 296 (PFFL…ATLA), 337 to 357 (IYIP…IIGF), 363 to 383 (LAAA…ILFC), 395 to 415 (FLVA…FSAN), and 416 to 436 (VLKL…MFII).

Belongs to the HAK/KUP transporter (TC 2.A.72) family.

The protein localises to the cell inner membrane. The catalysed reaction is K(+)(in) + H(+)(in) = K(+)(out) + H(+)(out). Functionally, responsible for the low-affinity transport of potassium into the cell. Likely operates as a K(+):H(+) symporter. This Yersinia pseudotuberculosis serotype O:1b (strain IP 31758) protein is Low affinity potassium transport system protein Kup.